Here is a 645-residue protein sequence, read N- to C-terminus: UvrABC system protein B (645 aa).

Positions 24–414 constitute a Helicase ATP-binding domain; sequence AGLNDNKRDQ…LFVEQVIRPT (391 aa). 37 to 44 lines the ATP pocket; it reads GVTGSGKT. The Beta-hairpin motif lies at 90–113; that stretch reads YYDYYQPEAYLPQTDTYIEKDSVI. Positions 426–591 constitute a Helicase C-terminal domain; that stretch reads AEAQVYDVVH…VLPKTIIKPI (166 aa). A UVR domain is found at 610 to 645; sequence KDTVSSLRKQMLAHAKNLEFEEAAKIKNIIGRINNL.

Belongs to the UvrB family. In terms of assembly, forms a heterotetramer with UvrA during the search for lesions. Interacts with UvrC in an incision complex.

Its subcellular location is the cytoplasm. Functionally, the UvrABC repair system catalyzes the recognition and processing of DNA lesions. A damage recognition complex composed of 2 UvrA and 2 UvrB subunits scans DNA for abnormalities. Upon binding of the UvrA(2)B(2) complex to a putative damaged site, the DNA wraps around one UvrB monomer. DNA wrap is dependent on ATP binding by UvrB and probably causes local melting of the DNA helix, facilitating insertion of UvrB beta-hairpin between the DNA strands. Then UvrB probes one DNA strand for the presence of a lesion. If a lesion is found the UvrA subunits dissociate and the UvrB-DNA preincision complex is formed. This complex is subsequently bound by UvrC and the second UvrB is released. If no lesion is found, the DNA wraps around the other UvrB subunit that will check the other stand for damage. The protein is UvrABC system protein B of Wolbachia sp. subsp. Brugia malayi (strain TRS).